Consider the following 61-residue polypeptide: Alpha-conotoxin-like Sm1.1 (61 aa).

Residues 1–16 form the signal peptide; sequence MFTVFLLVVLATTVVS. The propeptide occupies 17 to 43; that stretch reads FPSDRASDGRDDEAKDERSDMHESGRK. A disordered region spans residues 19–46; sequence SDRASDGRDDEAKDERSDMHESGRKGRG. Positions 21–42 are enriched in basic and acidic residues; sequence RASDGRDDEAKDERSDMHESGR. 2 cysteine pairs are disulfide-bonded: Cys48–Cys53 and Cys49–Cys59. Pro55 is subject to 4-hydroxyproline; partial. At Cys59 the chain carries Cysteine amide.

It belongs to the conotoxin A superfamily. Expressed by the venom duct.

It localises to the secreted. Its function is as follows. Alpha-conotoxins act on postsynaptic membranes, they bind to the nicotinic acetylcholine receptors (nAChR) and thus inhibit them. The polypeptide is Alpha-conotoxin-like Sm1.1 (Conus stercusmuscarum (Fly-specked cone)).